The chain runs to 328 residues: MPLHHLTRFPRLELIGAPTPLEYLPRLSDYLGREIYIKRDDVTPIAMGGNKLRKLEFLVADALREGADTLITAGAIQSNHVRQTAAVAAKLGLHCVALLENPIGTTAENYLTNGNRLLLDLFNTQIEMCDALTDPDAQLQTLATRIEAQGFRPYVIPVGGSSALGAMGYVESALEIAQQCAEVVGLSSVVVASGSAGTHAGLAVGLEHLMPDVELIGVTVSRSVAEQKPRVISLQQAIAGQLALTATADIHLWDDYFAPGYGVPNDAGMEAVKLLASLEGVLLDPVYTGKAMAGLIDGISQKRFNDDGPILFIHTGGAPALFAYHPHV.

The residue at position 51 (K51) is an N6-(pyridoxal phosphate)lysine.

It belongs to the ACC deaminase/D-cysteine desulfhydrase family. In terms of assembly, homodimer. The cofactor is pyridoxal 5'-phosphate.

The enzyme catalyses D-cysteine + H2O = hydrogen sulfide + pyruvate + NH4(+) + H(+). Catalyzes the alpha,beta-elimination reaction of D-cysteine and of several D-cysteine derivatives. It could be a defense mechanism against D-cysteine. This chain is D-cysteine desulfhydrase, found in Salmonella choleraesuis (strain SC-B67).